The following is a 217-amino-acid chain: Large ribosomal subunit protein bL25 (217 aa).

Positions 178 to 217 (VVAPTEEPTEEEIEAMEGEQQTEEPEVVGESKEDEEKTEE) are disordered. Over residues 184 to 205 (EPTEEEIEAMEGEQQTEEPEVV) the composition is skewed to acidic residues. Residues 206–217 (GESKEDEEKTEE) are compositionally biased toward basic and acidic residues.

It belongs to the bacterial ribosomal protein bL25 family. CTC subfamily. In terms of assembly, part of the 50S ribosomal subunit; part of the 5S rRNA/L5/L18/L25 subcomplex. Contacts the 5S rRNA. Binds to the 5S rRNA independently of L5 and L18.

In terms of biological role, this is one of the proteins that binds to the 5S RNA in the ribosome where it forms part of the central protuberance. In Staphylococcus aureus (strain USA300), this protein is Large ribosomal subunit protein bL25.